The primary structure comprises 869 residues: Bifunctional uridylyltransferase/uridylyl-removing enzyme (869 aa).

A uridylyltransferase region spans residues 1-332 (MTDTPAERPD…QFDGEATPEP (332 aa)). The tract at residues 333–691 (LGGGFSLRRG…RRAVPDNDAL (359 aa)) is uridylyl-removing. An HD domain is found at 450–572 (VDQHTLMVLR…VGTRERLDYL (123 aa)). ACT domains lie at 692–774 (EVFV…RAVP) and 798–869 (RISL…LDPV).

It belongs to the GlnD family. The cofactor is Mg(2+).

It catalyses the reaction [protein-PII]-L-tyrosine + UTP = [protein-PII]-uridylyl-L-tyrosine + diphosphate. The enzyme catalyses [protein-PII]-uridylyl-L-tyrosine + H2O = [protein-PII]-L-tyrosine + UMP + H(+). Its activity is regulated as follows. Uridylyltransferase (UTase) activity is inhibited by glutamine, while glutamine activates uridylyl-removing (UR) activity. Functionally, modifies, by uridylylation and deuridylylation, the PII regulatory proteins (GlnB and homologs), in response to the nitrogen status of the cell that GlnD senses through the glutamine level. Under low glutamine levels, catalyzes the conversion of the PII proteins and UTP to PII-UMP and PPi, while under higher glutamine levels, GlnD hydrolyzes PII-UMP to PII and UMP (deuridylylation). Thus, controls uridylylation state and activity of the PII proteins, and plays an important role in the regulation of nitrogen assimilation and metabolism. This Xanthomonas axonopodis pv. citri (strain 306) protein is Bifunctional uridylyltransferase/uridylyl-removing enzyme.